We begin with the raw amino-acid sequence, 275 residues long: N-(5'-phosphoribosyl)anthranilate isomerase 1, chloroplastic (275 aa).

The transit peptide at 1–32 (MSTGISTDLHVHFGALNFSKTYKSGLSNRTVS) directs the protein to the chloroplast.

Belongs to the TrpF family. Expressed in roots and shoots.

The protein localises to the plastid. Its subcellular location is the chloroplast. The catalysed reaction is N-(5-phospho-beta-D-ribosyl)anthranilate = 1-(2-carboxyphenylamino)-1-deoxy-D-ribulose 5-phosphate. The protein operates within amino-acid biosynthesis; L-tryptophan biosynthesis; L-tryptophan from chorismate: step 3/5. Its function is as follows. Catalyzes the conversion of 5-phosphoribosylanthranilate to l-(O-carboxyphenylamino)-l-deoxyribulose-5-phosphate, which is the third step of the tryptophan biosynthetic pathway. This is N-(5'-phosphoribosyl)anthranilate isomerase 1, chloroplastic (PAI1) from Arabidopsis thaliana (Mouse-ear cress).